A 523-amino-acid polypeptide reads, in one-letter code: MSQSVLIVDALGAGKGWRTRSRDVIGAGPRTVASLLESDYEVSLITYEDLQKLGLDSVMDYDTVGVSIMTGDERAARRMFDHTRSRTFRFIGGPGAADPNALLKTGADAAVIGEAEETLPELLEERGPVRGVYFRRGTEVDFPGPRPISRRFTRVNPEYIRAYAHRWAARVYVEIVRGCSNSCRTTFELPDGRKCSGCGNCREGEGGERWECPEGIPPGCGFCSVPSIFGPTRSRPLNEVVREVRGLVREGIRRVVLSASDVLDYGRGDLLTDPRTPPPNVEALRRLLRRTSKHVDVLFVENVKACLLNREIAELLGEYCRGTSVSVGVETGDPRLLRAIGKPSTLKEALRAIRLLRRAGLRPHAYFVYGLPGQTMKSAKLTAKAMKRAVEMGAEKITVYRFRPIPASAFGDFPPGPSPRNDEASRLIADTARRLNEALKRRMIGKRIRVYVAEPDLRRPRDAIGWPVKGGPKVRLKGARELVGTECEVEITGVVSDKVVSGKVVRILEEIDVEALEGRGVPG.

A Radical SAM core domain is found at 193–447 (RKCSGCGNCR…ALKRRMIGKR (255 aa)). 3 residues coordinate [4Fe-4S] cluster: Cys-212, Cys-220, and Cys-223.

[4Fe-4S] cluster serves as cofactor.

This is an uncharacterized protein from Methanopyrus kandleri (strain AV19 / DSM 6324 / JCM 9639 / NBRC 100938).